Here is a 98-residue protein sequence, read N- to C-terminus: A-type ATP synthase subunit F (98 aa).

This sequence belongs to the V-ATPase F subunit family. In terms of assembly, the A-type ATPase is composed of subunits A(3), B(3), C, D, E(1 or 2), F, H(2), I and K(x).

The protein resides in the cell membrane. In terms of biological role, component of the A-type ATP synthase that produces ATP from ADP in the presence of a proton gradient across the membrane. The polypeptide is A-type ATP synthase subunit F (Methanocaldococcus jannaschii (strain ATCC 43067 / DSM 2661 / JAL-1 / JCM 10045 / NBRC 100440) (Methanococcus jannaschii)).